A 2144-amino-acid chain; its full sequence is Insulin-like receptor (2144 aa).

The N-terminal stretch at 1-43 (MFNMPRGVTKSKSKRGKIKMENDMAAAATTTACTLGHICVLCR) is a signal peptide. Asparagine 74 carries an N-linked (GlcNAc...) asparagine glycan. A compositionally biased stretch (basic residues) spans 174–199 (RRQHQQQHHHHYQHHHQQHHQQHHQR). A disordered region spans residues 174–200 (RRQHQQQHHHHYQHHHQQHHQQHHQRQ). Asparagine 203 is a glycosylation site (N-linked (GlcNAc...) asparagine). The disordered stretch occupies residues 229 to 256 (NYKQQQQLQHNQQLPRATPQQKQQEKDR). A compositionally biased stretch (low complexity) spans 232–242 (QQQQLQHNQQL). N-linked (GlcNAc...) asparagine glycosylation is found at asparagine 265, asparagine 356, asparagine 376, asparagine 406, asparagine 468, and asparagine 509. 8 cysteine pairs are disulfide-bonded: cysteine 531/cysteine 539, cysteine 535/cysteine 545, cysteine 546/cysteine 554, cysteine 550/cysteine 564, cysteine 567/cysteine 576, cysteine 580/cysteine 591, cysteine 597/cysteine 618, and cysteine 635/cysteine 638. An FU repeat occupies 542 to 586 (EHTCCSQDCLGGCVIDKNGNESCISCRNVSFNNICMDSCPKGYYQ). 2 N-linked (GlcNAc...) asparagine glycosylation sites follow: asparagine 561 and asparagine 569. N-linked (GlcNAc...) asparagine glycosylation is found at asparagine 751, asparagine 810, asparagine 824, asparagine 839, asparagine 864, asparagine 898, asparagine 946, asparagine 1053, asparagine 1147, asparagine 1218, and asparagine 1265. Fibronectin type-III domains are found at residues 825–927 (VTTK…TNPG) and 928–1026 (RPSK…EYDD). The segment at 1053-1084 (NGSSDKSDGAEGAALDSNAIPNGGATNPSRRR) is disordered. In terms of domain architecture, Fibronectin type-III 3 spans 1210 to 1305 (LKVDLEHANN…EVEHIKVEPP (96 aa)). The helical transmembrane segment at 1311 to 1331 (VFFWLLGIGLAFLIVSLFGYV) threads the bilayer. Topologically, residues 1332–2144 (CYLHKRKVPS…PPNGFIGREA (813 aa)) are cytoplasmic. Residues 1351–1354 (NPFY) are chico-binding. The residue at position 1354 (tyrosine 1354) is a Phosphotyrosine; by autocatalysis. Residues 1371 to 1659 (IIQLAPLGQG…LEPQCPNSQF (289 aa)) enclose the Protein kinase domain. ATP-binding positions include 1377 to 1385 (LGQGSFGMV) and lysine 1405. Catalysis depends on aspartate 1519, which acts as the Proton acceptor. Phosphotyrosine; by autocatalysis is present on residues tyrosine 1545, tyrosine 1549, and tyrosine 1550. 4 disordered regions span residues 1690–1724 (VPLD…DQPP), 1788–1871 (RGYE…KKTV), 1886–1962 (LFNH…ISDN), and 2020–2144 (ISHN…GREA). Serine 1816 is modified (phosphoserine). 2 stretches are compositionally biased toward low complexity: residues 1849–1860 (STASAGSSNASS) and 1894–1916 (SNAS…NLTS). Positions 2042-2062 (SDEDNEQEEDDEDEDDDVDDE) are enriched in acidic residues. The span at 2063 to 2073 (HVEHIKMERMP) shows a compositional bias: basic and acidic residues. The segment covering 2084 to 2120 (SKTQPPRSRSVSQTRKSPTNPNSGIGATGAGNRSNLL) has biased composition (polar residues).

Belongs to the protein kinase superfamily. Tyr protein kinase family. Insulin receptor subfamily. In terms of assembly, tetramer of 2 alpha and 2 beta chains linked by disulfide bonds. The alpha chains contribute to the formation of the ligand-binding domain, while the beta chains carry the kinase domain. Interacts (via C-terminal cytoplasmic region) with dock/dreadlocks (via SH2 and SH3 domains); when autophosphorylated. May interact (via beta subunit) with chico/IRS-1; this interaction may lead to tyrosine phosphorylation of the insulin receptor substrate chico. Interacts with Elp6; the interaction may stabilize Elp6. It depends on Mn(2+) as a cofactor. In terms of processing, the 280 kDa proreceptor is proteolytically processed to form a 120 kDa alpha subunit and a 170 kDa beta subunit. The beta subunit undergoes cell-specific cleavage to generate a 90 kDa beta subunit and a free 60 kDa C-terminal subunit. Both the 90 kDa and the 170 kDa beta subunits can assemble with the alpha subunits to form mature receptors. Autophosphorylated on tyrosine residues, including Tyr-1549 and Tyr-1550, in response to exogenous insulin. Tyr-1549 and Tyr-1550 are dephosphorylated by Ptp61F recruited by the dock/dreadlocks adapter protein. Post-translationally, phosphorylation of Tyr-1354 is required for Chico-binding.

It is found in the membrane. Its subcellular location is the cell projection. The protein resides in the axon. The protein localises to the growth cone membrane. The catalysed reaction is L-tyrosyl-[protein] + ATP = O-phospho-L-tyrosyl-[protein] + ADP + H(+). With respect to regulation, activated in response to insulin. Autophosphorylation activates the kinase activity. Functionally, has a ligand-stimulated tyrosine-protein kinase activity. Binds 3 insulin-like peptide ligands. Regulates cell number and cell size during development by regulating cell growth and survival, affecting body size and organ size, including ovaries and imaginal disks. Plays a role in life-span determination. May be involved in regulation of other neuroendocrine signaling pathways. Involved in the development of the embryonic nervous system. Functions upstream of dock/dreadlocks for photoreceptor (R cell) axon guidance and targeting in the visual system. Involved in the acs mediated recovery of gut enterocytes following the cytoplasmic purge response to intestinal bacterial infection. The sequence is that of Insulin-like receptor from Drosophila melanogaster (Fruit fly).